The chain runs to 338 residues: Biotin synthase (338 aa).

The 225-residue stretch at 46–270 (NEVQLSTLLS…VAVARITMPA (225 aa)) folds into the Radical SAM core domain. Residues Cys-61, Cys-65, and Cys-68 each coordinate [4Fe-4S] cluster. Positions 105, 136, 196, and 274 each coordinate [2Fe-2S] cluster.

The protein belongs to the radical SAM superfamily. Biotin synthase family. As to quaternary structure, homodimer. [4Fe-4S] cluster serves as cofactor. [2Fe-2S] cluster is required as a cofactor.

It carries out the reaction (4R,5S)-dethiobiotin + (sulfur carrier)-SH + 2 reduced [2Fe-2S]-[ferredoxin] + 2 S-adenosyl-L-methionine = (sulfur carrier)-H + biotin + 2 5'-deoxyadenosine + 2 L-methionine + 2 oxidized [2Fe-2S]-[ferredoxin]. Its pathway is cofactor biosynthesis; biotin biosynthesis; biotin from 7,8-diaminononanoate: step 2/2. Its function is as follows. Catalyzes the conversion of dethiobiotin (DTB) to biotin by the insertion of a sulfur atom into dethiobiotin via a radical-based mechanism. This is Biotin synthase from Rhizorhabdus wittichii (strain DSM 6014 / CCUG 31198 / JCM 15750 / NBRC 105917 / EY 4224 / RW1) (Sphingomonas wittichii).